The following is a 2376-amino-acid chain: MSGGGADQQSSPPGSLFLSPPAPAPKNGSSSDSSVGEKLGAAAADAGAGRTEEYRRRRHTMDKDSRGAAATTTTEHRFFRRSVICDSNATALELPGLPLPLPQPGAAAVAQQRSPPEPHREETLTPAVAHVAQQPPAAATPGEPAAAVPAAASAPGSASRDRQVAQPSQAGSKEEPPSARSGSGGGSAKEPQEERSQQQDDIEELETKAVGMSNDGRFLKFDIEIGRGSFKTVYKGLDTETTVEVAWCELQDRKLTKSERQRFKEEAEMLKGLQHPNIVRFYDSWESTVKGKKCIVLVTELMTSGTLKTYLKRFKVMKIKVLRSWCRQILKGLQFLHTRTPPIIHRDLKCDNIFITGPTGSVKIGDLGLATLKRASFAKSVIGTPEFMAPEMYEEKYDESVDVYAFGMCMLEMATSEYPYSECQNAAQIYRRVTSGVKPASFDKVAIPEVKEIIEGCIRQNKDERYSIKDLLNHAFFQEETGVRVELAEEDDGEKIAIKLWLRIEDIKKLKGKYKDNEAIEFSFDLERDVPEDVAQEMVESGYVCEGDHKTMAKAIKDRVSLIKRKREQRQLVREEQEKRKQEESSLKQQGEQQSSASQAGILQPSSASTGLPAAATTSASVSTQVEPEEPEADQHQQLQYQQPSISVLSDGTVDSGQGSSVFTESRVSSQQTVSYGSQHEQAHSTCTLPGHTASVVQAQAQPHGGYPPSSMAQGQSQGQPSSSSLTGIPSSQPVQHSQQQQGVQQTAPSQQTVQYSLPQTSAPSEPTTAQPASQPQPPQVLPPVSAGKQLPVSQPVPTIQGEPQISVATQPSVVPVHSGAHFLPVGQPLPPSLLPQYPVSQVPSAPHVSAAQPGFSPLPVTAAAGVNQPLLTLASSAAAAAVPGGSTVVPSQLPTLLQPVTQLPSQAHPQLLQTAVQSMGIPANLGQTAEAPLPSGDVLYQGFPPRLPPQYPGDSNIAPSSSVASVCIPSTVLSPPRPTEALAAPGYFPTVVQSYAESNLLVPVGSIGGQIQVSQPAVSLAQAPTTSSQQAALESTQGVSQVAPPEPVPAAPPQPTQPTTLVSSIDRSAHSDVASGMSDGNENVPSSSGRHEGRTIKRHYRKSVRSRSRHEKTSRPKLRILNVSNKGDRVVECQLETHNRKMVTFKFDLDGDNPEEIATIMVNNDFILAIEREAFVDQVREIIEKADEMLSEDVSVEPEGDQGLENLQGKDDYGFSGSQKLEGEFKQPIPASSMPQQIAGLPTSSLTQVVHSAGRRFIVSPVPESRLRESKVFTSEISDTVAASTSPGTGMNLSHSASSLSLQQAFSELRRAQMTEGPSTAPPHFSHTGPTFPVVPPSMSSIAGAAATPSVSVPATSCPFSDISTSVTPSEVTASTEKGIAGVATCTGVISSSGLTVPPASDSPILSSVVSSITVPVAVSVSTTSLSVQAPTPGSIVSNTGTFPSISVAMTSASAVSSTAAPGAKPPPVSSQQVSGSTAGITTLASVPTTAPAPSVASQPSLSLSSSTSAPTLAETIVVSAHSLDKASHSSTAGLALSLPASSSSASPAAGVSSSVSQPGVAHPLVIPSAVASIPVLSQAGPTCAPLLPQVPGIPPLVQPAASVPAVQQTLVHSQPQPALLPNQPHTHCPEMDADAQPRAPGIDDIKTLEEKLRSLFSEHSSSGTQHASVSLETSLVVETTVTPGIPTTAVAPGKLMTSTTSTCLPPTSLPLGTTGLSILPVVTPGQVSTPVSTIPAVKPGTAPSKPPSTKPPVLPLGTELPAGTPPSEQLPPFPGPSLMQAQQPLEDLDAQLRRTLSPETVVLTSTVGPVSVVAPTAAVEAGAQLQKDVSQVTEGPIPAPTSGTGVFQMGRFQVSVAMDDTQKEGKNKSEDVKSVHFESSTSESSVLSSSSPESTLVKPEPNGTAIRGISSDMPDSAHKTSASEAKSEAGQPTKVGRFQVTTTADKVGRFSVSRTEDAIAEAKKEGPVASPPFMDLEHSILPAVIPKKEKPELSEPSHLNGPSSDLEAAFLSRDGDDGSGSPHSPPQLCSKSLPIQSLSQSLSNSFNSSYMSSDNESDIEDEDLKLELRRLREKHLKEIQDLQSRQKHEIESLYTRLGKAPPAVIIPAAAPLAGRRRRPTKSKGSKSSRSSSLGNKSPGPAGNLSGQSTATVLHPQQTLPAPGNIPETGQNQLLQPLKPSPSSDNLYSAFTSDGAISVPSLSAPGQGTSSTNTVGGTVSSQAAQAQPPTMTSSRKGTFTDDLHKLVDNWARDAMNLSGRRGSKGHMSYEGPGMARKFSAPGQLCISMTSNLGGSAPISAASATSLGHFTKSMCPPQQYGFPAPPFGTQWSGTGGPAPQPLSQFQPVGTASLQNFNISNLQKSISNPPGSNLRTT.

Disordered stretches follow at residues 1-78 and 93-201; these read MSGG…EHRF and ELPG…QQDD. 2 stretches are compositionally biased toward low complexity: residues 10 to 19 and 40 to 49; these read SSPPGSLFLS and GAAAADAGAG. Residues S15 and S19 each carry the phosphoserine modification. Over residues 50-66 the composition is skewed to basic and acidic residues; the sequence is RTEEYRRRRHTMDKDSR. Phosphothreonine is present on T60. Residues 125-158 show a composition bias toward low complexity; that stretch reads TPAVAHVAQQPPAAATPGEPAAAVPAAASAPGSA. S172 is modified (phosphoserine). The region spanning 219 to 477 is the Protein kinase domain; it reads LKFDIEIGRG…IKDLLNHAFF (259 aa). S229 contacts ATP. Chloride is bound by residues F281 and L297. Residues 299–302 and K349 each bind ATP; that span reads TELM. The active-site Proton acceptor is D366. Positions 367 and 369 each coordinate chloride. S376 and S380 each carry phosphoserine; by autocatalysis. An autoinhibitory domain region spans residues 486–553; the sequence is ELAEEDDGEK…VCEGDHKTMA (68 aa). Positions 571 to 586 are enriched in basic and acidic residues; sequence QLVREEQEKRKQEESS. 3 disordered regions span residues 571-641, 701-799, and 1026-1118; these read QLVR…QLQY, AQPH…PVPT, and TTSS…SRPK. 2 stretches are compositionally biased toward low complexity: residues 587 to 601 and 614 to 624; these read LKQQ…SQAG and AAATTSASVST. The interval 627–637 is interaction with KLHL3; the sequence is EPEEPEADQHQ. The span at 708 to 752 shows a compositional bias: low complexity; that stretch reads PPSSMAQGQSQGQPSSSSLTGIPSSQPVQHSQQQQGVQQTAPSQQ. The segment covering 753-766 has biased composition (polar residues); that stretch reads TVQYSLPQTSAPSE. Over residues 1045-1057 the composition is skewed to pro residues; sequence PPEPVPAAPPQPT. The segment covering 1079 to 1089 has biased composition (polar residues); it reads SDGNENVPSSS. The span at 1097 to 1118 shows a compositional bias: basic residues; sequence IKRHYRKSVRSRSRHEKTSRPK. Positions 1257–1260 match the RFXV motif 1 motif; that stretch reads RFIV. S1261 is subject to Phosphoserine. Disordered regions lie at residues 1459–1478 and 1734–1770; these read STAA…VSGS and STIP…PPSE. Residues 1746 to 1756 are compositionally biased toward pro residues; that stretch reads SKPPSTKPPVL. The RFXV motif 2 motif lies at 1853–1856; the sequence is RFQV. Positions 1862–1878 are enriched in basic and acidic residues; it reads DTQKEGKNKSEDVKSVH. The tract at residues 1862 to 1942 is disordered; the sequence is DTQKEGKNKS…QPTKVGRFQV (81 aa). Positions 1881–1899 are enriched in low complexity; sequence SSTSESSVLSSSSPESTLV. Short sequence motifs (RFXV motif) lie at residues 1939 to 1942 and 1951 to 1954; these read RFQV and RFSV. S1972, S1996, S2005, S2006, S2021, S2023, and S2026 each carry phosphoserine. 2 disordered regions span residues 1991 to 2033 and 2110 to 2239; these read EKPE…LCSK and AAAP…RKGT. A compositionally biased stretch (basic residues) spans 2116–2128; that stretch reads GRRRRPTKSKGSK. The segment covering 2129 to 2141 has biased composition (low complexity); that stretch reads SSRSSSLGNKSPG. Composition is skewed to polar residues over residues 2146–2161 and 2169–2193; these read LSGQ…QQTL and ETGQ…SAFT. Residues 2207–2223 show a composition bias toward low complexity; that stretch reads GQGTSSTNTVGGTVSSQ. Residues 2224 to 2238 are compositionally biased toward polar residues; that stretch reads AAQAQPPTMTSSRKG. Positions 2235-2255 are amphipathic alpha-helix; sequence SRKGTFTDDLHKLVDNWARDA. A phosphoserine mark is found at S2264, S2280, S2364, and S2366.

It belongs to the protein kinase superfamily. Ser/Thr protein kinase family. WNK subfamily. In terms of assembly, interacts with WNK3. Interacts with WNK4; inhibiting the activity of WNK4. Interacts with SGK1; promoting its activation. Associates with the mTORC2 complex. Interacts with UVRAG. Interacts (via amphipathic alpha-helix region) with EMC2; promoting the ER membrane protein complex assembly. Mg(2+) serves as cofactor. Autophosphorylated at Ser-376 and Ser-380, promoting its activity. Autophosphorylation at Ser-380 is inhibited by intracellular calcium. Phosphorylation at Thr-60 increases ability to activate SGK1. In terms of processing, ubiquitinated by the BCR(KLHL3) complex, leading to its degradation. Also ubiquitinated by the BCR(KLHL2) complex.

It is found in the cytoplasm. The protein localises to the nucleus. It localises to the cytoskeleton. Its subcellular location is the spindle. The enzyme catalyses L-seryl-[protein] + ATP = O-phospho-L-seryl-[protein] + ADP + H(+). It carries out the reaction L-threonyl-[protein] + ATP = O-phospho-L-threonyl-[protein] + ADP + H(+). Activated in response to hyperosmotic stress: cell shrinkage promotes formation of a membraneless compartment that concentrates WNK1 with its substrates, OXSR1/OSR1 and STK39/SPAK. Activation requires autophosphorylation of Ser-380 and, to a lower extent, Ser-376. Autophosphorylation and subsequent activation is inhibited by increases in intracellular ionic strength: Cl(-) potently inhibits WNK1 kinase activity via direct binding. Also inhibited by K(+) ions. Functionally, serine/threonine-protein kinase component of the WNK1-SPAK/OSR1 kinase cascade, which acts as a key regulator of blood pressure and regulatory volume increase by promoting ion influx. WNK1 mediates regulatory volume increase in response to hyperosmotic stress by acting as a molecular crowding sensor, which senses cell shrinkage and mediates formation of a membraneless compartment by undergoing liquid-liquid phase separation. The membraneless compartment concentrates WNK1 with its substrates, OXSR1/OSR1 and STK39/SPAK, promoting WNK1-dependent phosphorylation and activation of downstream kinases OXSR1/OSR1 and STK39/SPAK. Following activation, OXSR1/OSR1 and STK39/SPAK catalyze phosphorylation of ion cotransporters SLC12A1/NKCC2, SLC12A2/NKCC1, SLC12A5/KCC2 and SLC12A6/KCC3, regulating their activity. Phosphorylation of Na-K-Cl cotransporters SLC12A2/NKCC1 and SLC12A2/NKCC1 promote their activation and ion influx; simultaneously, phosphorylation of K-Cl cotransporters SLC12A5/KCC2 and SLC12A6/KCC3 inhibit their activity, blocking ion efflux. Also acts as a regulator of angiogenesis in endothelial cells via activation of OXSR1/OSR1 and STK39/SPAK: activation of OXSR1/OSR1 regulates chemotaxis and invasion, while STK39/SPAK regulates endothelial cell proliferation. Also acts independently of the WNK1-SPAK/OSR1 kinase cascade by catalyzing phosphorylation of other substrates, such as SYT2, PCF11 and NEDD4L. Mediates phosphorylation of SYT2, regulating SYT2 association with phospholipids and membrane-binding. Regulates mRNA export in the nucleus by mediating phosphorylation of PCF11, thereby decreasing the association between PCF11 and POLR2A/RNA polymerase II and promoting mRNA export to the cytoplasm. Acts as a negative regulator of autophagy. Required for the abscission step during mitosis, independently of the WNK1-SPAK/OSR1 kinase cascade. May also play a role in actin cytoskeletal reorganization. Also acts as a scaffold protein independently of its protein kinase activity: negatively regulates cell membrane localization of various transporters and channels, such as SLC4A4, SLC26A6, SLC26A9, TRPV4 and CFTR. Involved in the regulation of epithelial Na(+) channel (ENaC) by promoting activation of SGK1 in a kinase-independent manner: probably acts as a scaffold protein that promotes the recruitment of SGK1 to the mTORC2 complex in response to chloride, leading to mTORC2-dependent phosphorylation and activation of SGK1. Acts as an assembly factor for the ER membrane protein complex independently of its protein kinase activity: associates with EMC2 in the cytoplasm via its amphipathic alpha-helix, and prevents EMC2 ubiquitination and subsequent degradation, thereby promoting EMC2 stabilization. The polypeptide is Serine/threonine-protein kinase WNK1 (Sus scrofa (Pig)).